A 373-amino-acid polypeptide reads, in one-letter code: D-alanine--D-alanine ligase (373 aa).

The region spanning 156-363 (KKLWSAAGLP…YPTLLATMVE (208 aa)) is the ATP-grasp domain. 184–239 (LQRLGLPAYVKPARGGSSIGVSRVSSFDELPAAIAAARRHDPKVIVEAAINGRELE) serves as a coordination point for ATP. Mg(2+)-binding residues include Asp-318, Glu-330, and Asn-332.

The protein belongs to the D-alanine--D-alanine ligase family. Mg(2+) serves as cofactor. It depends on Mn(2+) as a cofactor.

It localises to the cytoplasm. It carries out the reaction 2 D-alanine + ATP = D-alanyl-D-alanine + ADP + phosphate + H(+). Its pathway is cell wall biogenesis; peptidoglycan biosynthesis. Cell wall formation. The polypeptide is D-alanine--D-alanine ligase (Mycobacterium ulcerans (strain Agy99)).